The sequence spans 213 residues: Superoxide dismutase [Mn] (213 aa).

The Mn(2+) site is built by H27, H82, D168, and H172.

It belongs to the iron/manganese superoxide dismutase family. Homodimer.

The enzyme catalyses 2 superoxide + 2 H(+) = H2O2 + O2. Its activity is regulated as follows. Inhibited by hydrogen peroxide. Functionally, destroys superoxide anion radicals which are normally produced within the cells and which are toxic to biological systems. The sequence is that of Superoxide dismutase [Mn] (sodA) from Haemophilus ducreyi (strain 35000HP / ATCC 700724).